Consider the following 98-residue polypeptide: Small ribosomal subunit protein bS18 (98 aa).

Belongs to the bacterial ribosomal protein bS18 family. Part of the 30S ribosomal subunit. Forms a tight heterodimer with protein bS6.

In terms of biological role, binds as a heterodimer with protein bS6 to the central domain of the 16S rRNA, where it helps stabilize the platform of the 30S subunit. This Flavobacterium psychrophilum (strain ATCC 49511 / DSM 21280 / CIP 103535 / JIP02/86) protein is Small ribosomal subunit protein bS18.